The primary structure comprises 95 residues: MITITEHYTPMFRRGYRMQFEKTQDCHVILYPEGMAKLNDSATFILQLVDGERTIANIIDELNERFPEAGGVNDDVKDFFAQAHAQKWITFREPA.

This sequence belongs to the PqqD family. Monomer. Interacts with PqqE.

Its pathway is cofactor biosynthesis; pyrroloquinoline quinone biosynthesis. In terms of biological role, functions as a PqqA binding protein and presents PqqA to PqqE, in the pyrroloquinoline quinone (PQQ) biosynthetic pathway. The protein is PqqA binding protein of Rahnella aquatilis.